The primary structure comprises 589 residues: MSRRLLPRAEKRRRRLEQRQQPDEQRRRSGAMVKMAAAGGGGGGGRYYGGGSEGGRAPKRLKTDNAGDQHGGGGGGGGGAGAAGGGGGGENYDDPHKTPASPVVHIRGLIDGVVEADLVEALQEFGPISYVVVMPKKRQALVEFEDVLGACNAVNYAADNQIYIAGHPAFVNYSTSQKISRPGDSDDSRSVNSVLLFTILNPIYSITTDVLYTICNPCGPVQRIVIFRKNGVQAMVEFDSVQSAQRAKASLNGADIYSGCCTLKIEYAKPTRLNVFKNDQDTWDYTNPNLSGQGDPGSNPNKRQRQPPLLGDHPAEYGGPHGGYHSHYHDEGYGPPPPHYEGRRMGPPVGGHRRGPSRYGPQYGHPPPPPPPPEYGPHADSPVLMVYGLDQSKMNCDRVFNVFCLYGNVEKVKFMKSKPGAAMVEMADGYAVDRAITHLNNNFMFGQKLNVCVSKQPAIMPGQSYGLEDGSCSYKDFSESRNNRFSTPEQAAKNRIQHPSNVLHFFNAPLEVTEENFFEICDELGVKRPSSVKVFSGKSERSSSGLLEWESKSDALETLGFLNHYQMKNPNGPYPYTLKLCFSTAQHAS.

Residues 1–16 are compositionally biased toward basic residues; it reads MSRRLLPRAEKRRRRL. The segment at 1–100 is disordered; the sequence is MSRRLLPRAE…NYDDPHKTPA (100 aa). The segment covering 17 to 27 has biased composition (basic and acidic residues); sequence EQRQQPDEQRR. Residues 38–54 show a composition bias toward gly residues; the sequence is AGGGGGGGRYYGGGSEG. Position 52 is a phosphoserine (Ser-52). Glycyl lysine isopeptide (Lys-Gly) (interchain with G-Cter in SUMO2) cross-links involve residues Lys-59 and Lys-62. Residues 69-90 are compositionally biased toward gly residues; sequence QHGGGGGGGGGAGAAGGGGGGE. A Phosphoserine modification is found at Ser-101. The region spanning 102–176 is the RRM 1 domain; the sequence is PVVHIRGLID…HPAFVNYSTS (75 aa). Residue Lys-136 forms a Glycyl lysine isopeptide (Lys-Gly) (interchain with G-Cter in SUMO2) linkage. At Ser-185 the chain carries Phosphoserine. Residues 193 to 270 form the RRM 2 domain; sequence SVLLFTILNP…CTLKIEYAKP (78 aa). Lys-269 is subject to N6-acetyllysine. The span at 284–301 shows a compositional bias: polar residues; sequence DYTNPNLSGQGDPGSNPN. Residues 284-378 form a disordered region; sequence DYTNPNLSGQ…PPPPPEYGPH (95 aa). Residues Ser-291 and Ser-298 each carry the phosphoserine modification. Lys-302 is covalently cross-linked (Glycyl lysine isopeptide (Lys-Gly) (interchain with G-Cter in SUMO2)). Asymmetric dimethylarginine occurs at positions 354 and 358. Positions 364–375 are enriched in pro residues; sequence GHPPPPPPPPEY. A Phosphoserine modification is found at Ser-381. RRM domains are found at residues 382 to 478 and 495 to 583; these read PVLM…KDFS and RIQH…LCFS. At Ser-544 the chain carries Phosphoserine; by CaMK4. A Glycyl lysine isopeptide (Lys-Gly) (interchain with G-Cter in SUMO2) cross-link involves residue Lys-568.

As to quaternary structure, identified in a IGF2BP1-dependent mRNP granule complex containing untranslated mRNAs. Interacts with HNRNPLL. Interacts with APEX1; the interaction is DNA-dependent. Component of a complex with SETD2. Interacts with ELAVL1. Part of a transcription inhibitory ribonucleoprotein complex composed at least of the circular RNA circZNF827, ZNF827 and HNRNPK. Interacts with CHD8 in an RNA-dependent manner. Post-translationally, several isoelectric forms of the L protein are probably the results of post-translational modifications. Phosphorylation at Ser-544 by CaMK4 enhances interaction with a CaMK4-responsive RNA element (CaRRE1), and prevents inclusion of the stress axis-regulated exon (STREX) of the KCNMA1 potassium channel transcripts upon membrane depolarization.

Its subcellular location is the nucleus. It is found in the nucleoplasm. The protein localises to the cytoplasm. In terms of biological role, splicing factor binding to exonic or intronic sites and acting as either an activator or repressor of exon inclusion. Exhibits a binding preference for CA-rich elements. Component of the heterogeneous nuclear ribonucleoprotein (hnRNP) complexes and associated with most nascent transcripts. Associates, together with APEX1, to the negative calcium responsive element (nCaRE) B2 of the APEX2 promoter. As part of a ribonucleoprotein complex composed at least of ZNF827, HNRNPK and the circular RNA circZNF827 that nucleates the complex on chromatin, may negatively regulate the transcription of genes involved in neuronal differentiation. Regulates alternative splicing of a core group of genes involved in neuronal differentiation, likely by mediating H3K36me3-coupled transcription elongation and co-transcriptional RNA processing via interaction with CHD8. This Homo sapiens (Human) protein is Heterogeneous nuclear ribonucleoprotein L (HNRNPL).